Reading from the N-terminus, the 129-residue chain is Sulfurtransferase TusD (129 aa).

Cys-79 serves as the catalytic Cysteine persulfide intermediate.

The protein belongs to the DsrE/TusD family. In terms of assembly, heterohexamer, formed by a dimer of trimers. The hexameric TusBCD complex contains 2 copies each of TusB, TusC and TusD. The TusBCD complex interacts with TusE.

It is found in the cytoplasm. In terms of biological role, part of a sulfur-relay system required for 2-thiolation of 5-methylaminomethyl-2-thiouridine (mnm(5)s(2)U) at tRNA wobble positions. Accepts sulfur from TusA and transfers it in turn to TusE. The sequence is that of Sulfurtransferase TusD from Pectobacterium carotovorum subsp. carotovorum (strain PC1).